A 154-amino-acid chain; its full sequence is S-ribosylhomocysteine lyase (154 aa).

His-57, His-61, and Cys-124 together coordinate Fe cation.

It belongs to the LuxS family. As to quaternary structure, homodimer. Requires Fe cation as cofactor.

It carries out the reaction S-(5-deoxy-D-ribos-5-yl)-L-homocysteine = (S)-4,5-dihydroxypentane-2,3-dione + L-homocysteine. Involved in the synthesis of autoinducer 2 (AI-2) which is secreted by bacteria and is used to communicate both the cell density and the metabolic potential of the environment. The regulation of gene expression in response to changes in cell density is called quorum sensing. Catalyzes the transformation of S-ribosylhomocysteine (RHC) to homocysteine (HC) and 4,5-dihydroxy-2,3-pentadione (DPD). This Exiguobacterium sibiricum (strain DSM 17290 / CCUG 55495 / CIP 109462 / JCM 13490 / 255-15) protein is S-ribosylhomocysteine lyase.